The following is a 304-amino-acid chain: Urease accessory protein UreD 2 (304 aa).

The protein belongs to the UreD family. UreD, UreF and UreG form a complex that acts as a GTP-hydrolysis-dependent molecular chaperone, activating the urease apoprotein by helping to assemble the nickel containing metallocenter of UreC. The UreE protein probably delivers the nickel.

The protein localises to the cytoplasm. In terms of biological role, required for maturation of urease via the functional incorporation of the urease nickel metallocenter. Disrupting the ure2 operon has no effect on urease activity or pathogen survival in BALB/c mice when administered orally. This is Urease accessory protein UreD 2 from Brucella abortus (strain 2308).